The following is a 393-amino-acid chain: Chorismate synthase (393 aa).

The NADP(+) site is built by Arg40 and Arg46. FMN contacts are provided by residues Arg129–Ser131, Gln249–Ala250, Gly301, Lys316–Thr320, and Arg342.

It belongs to the chorismate synthase family. In terms of assembly, homotetramer. FMNH2 is required as a cofactor.

It carries out the reaction 5-O-(1-carboxyvinyl)-3-phosphoshikimate = chorismate + phosphate. The protein operates within metabolic intermediate biosynthesis; chorismate biosynthesis; chorismate from D-erythrose 4-phosphate and phosphoenolpyruvate: step 7/7. Its function is as follows. Catalyzes the anti-1,4-elimination of the C-3 phosphate and the C-6 proR hydrogen from 5-enolpyruvylshikimate-3-phosphate (EPSP) to yield chorismate, which is the branch point compound that serves as the starting substrate for the three terminal pathways of aromatic amino acid biosynthesis. This reaction introduces a second double bond into the aromatic ring system. This is Chorismate synthase from Geotalea uraniireducens (strain Rf4) (Geobacter uraniireducens).